The following is an 85-amino-acid chain: uncharacterized protein (85 aa).

This is an uncharacterized protein from Gallid herpesvirus 2 (strain Chicken/Md5/ATCC VR-987) (GaHV-2).